Here is an 87-residue protein sequence, read N- to C-terminus: Phosphocarrier protein HPr (87 aa).

Positions 1–87 constitute an HPr domain; sequence MAEKTFTITA…EEVIKEGLGE (87 aa). H15 serves as the catalytic Pros-phosphohistidine intermediate. S46 is subject to Phosphoserine; by HPrK/P.

It belongs to the HPr family.

It localises to the cytoplasm. With respect to regulation, phosphorylation on Ser-46 inhibits the phosphoryl transfer from enzyme I to HPr. Its function is as follows. General (non sugar-specific) component of the phosphoenolpyruvate-dependent sugar phosphotransferase system (sugar PTS). This major carbohydrate active-transport system catalyzes the phosphorylation of incoming sugar substrates concomitantly with their translocation across the cell membrane. The phosphoryl group from phosphoenolpyruvate (PEP) is transferred to the phosphoryl carrier protein HPr by enzyme I. Phospho-HPr then transfers it to the PTS EIIA domain. In terms of biological role, P-Ser-HPr interacts with the catabolite control protein A (CcpA), forming a complex that binds to DNA at the catabolite response elements cre, operator sites preceding a large number of catabolite-regulated genes. Thus, P-Ser-HPr is a corepressor in carbon catabolite repression (CCR), a mechanism that allows bacteria to coordinate and optimize the utilization of available carbon sources. P-Ser-HPr also plays a role in inducer exclusion, in which it probably interacts with several non-PTS permeases and inhibits their transport activity. The chain is Phosphocarrier protein HPr (ptsH) from Halalkalibacterium halodurans (strain ATCC BAA-125 / DSM 18197 / FERM 7344 / JCM 9153 / C-125) (Bacillus halodurans).